We begin with the raw amino-acid sequence, 147 residues long: Leghemoglobin-1 (147 aa).

Residues 2-147 (SFTDKQEALV…LATAIKKAMS (146 aa)) enclose the Globin domain. Residues Y25 and Y30 each carry the nitrated tyrosine modification. Heme b is bound at residue S45. Position 45 is a phosphoserine (S45). H62 lines the O2 pocket. Heme b-binding residues include K65, H94, and K97. Y135 is subject to Nitrated tyrosine.

The protein belongs to the plant globin family. As to quaternary structure, monomer. In terms of processing, nitrated in effective nodules and particularly in hypoxic conditions; this mechanism may play a protective role in the symbiosis by buffering toxic peroxynitrite NO(2)(-). Nitration level decrease during nodule senescence. Phosphorylation at Ser-45 disrupts the molecular environment of its porphyrin ring oxygen binding pocket, thus leading to a reduced oxygen consumption and to the delivery of oxygen O(2) to symbiosomes. Root nodules.

It localises to the cytoplasm. It is found in the cytosol. Its subcellular location is the nucleus. Functionally, leghemoglobin that reversibly binds oxygen O(2) through a pentacoordinated heme iron. In root nodules, facilitates the diffusion of oxygen to the bacteroids while preventing the bacterial nitrogenase from being inactivated by buffering dioxygen, nitric oxide and carbon monoxide, and promoting the formation of reactive oxygen species (ROS, e.g. H(2)O(2)). This role is essential for symbiotic nitrogen fixation (SNF). This Medicago sativa (Alfalfa) protein is Leghemoglobin-1.